We begin with the raw amino-acid sequence, 627 residues long: 1-deoxy-D-xylulose-5-phosphate synthase (627 aa).

Residues His87 and 128–130 (GHS) contribute to the thiamine diphosphate site. Mg(2+) is bound at residue Asp159. Thiamine diphosphate contacts are provided by residues 160–161 (GA), Asn188, Phe295, and Glu375. Asn188 contributes to the Mg(2+) binding site.

The protein belongs to the transketolase family. DXPS subfamily. Homodimer. Mg(2+) is required as a cofactor. The cofactor is thiamine diphosphate.

The enzyme catalyses D-glyceraldehyde 3-phosphate + pyruvate + H(+) = 1-deoxy-D-xylulose 5-phosphate + CO2. Its pathway is metabolic intermediate biosynthesis; 1-deoxy-D-xylulose 5-phosphate biosynthesis; 1-deoxy-D-xylulose 5-phosphate from D-glyceraldehyde 3-phosphate and pyruvate: step 1/1. Its function is as follows. Catalyzes the acyloin condensation reaction between C atoms 2 and 3 of pyruvate and glyceraldehyde 3-phosphate to yield 1-deoxy-D-xylulose-5-phosphate (DXP). The chain is 1-deoxy-D-xylulose-5-phosphate synthase from Pseudomonas aeruginosa (strain LESB58).